The primary structure comprises 102 residues: Small ribosomal subunit protein uS10 (102 aa).

Belongs to the universal ribosomal protein uS10 family. Part of the 30S ribosomal subunit.

Its function is as follows. Involved in the binding of tRNA to the ribosomes. The polypeptide is Small ribosomal subunit protein uS10 (Streptococcus equi subsp. zooepidemicus (strain MGCS10565)).